A 227-amino-acid polypeptide reads, in one-letter code: MNIFNPNHDRKAIVIFSGGQDSTTCLFQAIAEYGKENIEAITFQYGQRHAIELEKARAIVQDLGIKQTLIDTSVMKAITHNALMDEQAHIEQKENELPNTFVDGRNALFLLYAAIYAKGQGIQDIITGVCETDFSGYPDCRDVFIKSMNVTLNLAMDYQFNIKTPLMYLTKAQTWQLADELGVLDYVQKHTHTCYEGIEGGCGKCPSCILRNKGLKKYLTQKGRKNV.

16–26 (FSGGQDSTTCL) serves as a coordination point for ATP. C194, C202, C205, and C208 together coordinate Zn(2+).

It belongs to the QueC family. It depends on Zn(2+) as a cofactor.

The enzyme catalyses 7-carboxy-7-deazaguanine + NH4(+) + ATP = 7-cyano-7-deazaguanine + ADP + phosphate + H2O + H(+). It functions in the pathway purine metabolism; 7-cyano-7-deazaguanine biosynthesis. Functionally, catalyzes the ATP-dependent conversion of 7-carboxy-7-deazaguanine (CDG) to 7-cyano-7-deazaguanine (preQ(0)). The polypeptide is 7-cyano-7-deazaguanine synthase (Haemophilus influenzae (strain 86-028NP)).